Here is a 365-residue protein sequence, read N- to C-terminus: Caffeic acid 3-O-methyltransferase (365 aa).

Residue N133 coordinates (E)-ferulate. S-adenosyl-L-homocysteine contacts are provided by G210, D233, D253, M254, M266, and K267. H271 (proton acceptor) is an active-site residue. D272 serves as a coordination point for (E)-5-hydroxyferulate.

The protein belongs to the class I-like SAM-binding methyltransferase superfamily. Cation-independent O-methyltransferase family. COMT subfamily. As to quaternary structure, homodimer.

It catalyses the reaction (E)-caffeate + S-adenosyl-L-methionine = (E)-ferulate + S-adenosyl-L-homocysteine + H(+). It carries out the reaction (E)-5-hydroxyferulate + S-adenosyl-L-methionine = (E)-sinapate + S-adenosyl-L-homocysteine + H(+). It functions in the pathway aromatic compound metabolism; phenylpropanoid biosynthesis. With respect to regulation, inhibited by Cu(2+), and to a lesser extent by Ni(2+), Mn(2+), Co(2+), Fe(3+) and Zn(2+). Unaffected by Fe(2+) and Mg(2+). Functionally, catalyzes the conversion of caffeic acid to ferulic acid and of 5-hydroxyferulic acid to sinapic acid. The resulting products may subsequently be converted to the corresponding alcohols that are incorporated into lignins. The polypeptide is Caffeic acid 3-O-methyltransferase (Ammi majus (Bishop's weed)).